Reading from the N-terminus, the 215-residue chain is Glutathione S-transferase D2 (215 aa).

Positions Met1–Asp80 constitute a GST N-terminal domain. Residues His50–Ile52 and Glu64–Arg66 contribute to the glutathione site. The 127-residue stretch at Asp86–Leu212 folds into the GST C-terminal domain.

It belongs to the GST superfamily. Delta family. In terms of assembly, homodimer.

It carries out the reaction RX + glutathione = an S-substituted glutathione + a halide anion + H(+). Conjugation of reduced glutathione to a wide number of exogenous and endogenous hydrophobic electrophiles. May be involved in detoxification. This chain is Glutathione S-transferase D2, found in Drosophila melanogaster (Fruit fly).